The primary structure comprises 348 residues: Protein RecA (348 aa).

Residue 64 to 71 (GPESSGKT) coordinates ATP. Residues 325-335 (YEIDGSNKEPL) show a composition bias toward basic and acidic residues. Positions 325 to 348 (YEIDGSNKEPLDEGEETLSLLDDE) are disordered. Residues 336-348 (DEGEETLSLLDDE) show a composition bias toward acidic residues.

Belongs to the RecA family.

It is found in the cytoplasm. Can catalyze the hydrolysis of ATP in the presence of single-stranded DNA, the ATP-dependent uptake of single-stranded DNA by duplex DNA, and the ATP-dependent hybridization of homologous single-stranded DNAs. It interacts with LexA causing its activation and leading to its autocatalytic cleavage. The protein is Protein RecA of Listeria monocytogenes serotype 4b (strain CLIP80459).